Reading from the N-terminus, the 34-residue chain is Protamine-Y1/Y2 (34 aa).

A disordered region spans residues 1-34 (PRRRRQASRPVRRRRRYRRSTAARRRRRVVRRRR).

As to expression, testis.

Its subcellular location is the nucleus. It is found in the chromosome. Protamines substitute for histones in the chromatin of sperm during the haploid phase of spermatogenesis. They compact sperm DNA into a highly condensed, stable and inactive complex. The protein is Protamine-Y1/Y2 of Thunnus thynnus (Atlantic bluefin tuna).